A 130-amino-acid polypeptide reads, in one-letter code: uncharacterized protein (130 aa).

Residues 1–28 (MELAKERNGPHQKHHGQCQNHCTSPNTV) form a disordered region. Polar residues predominate over residues 17–28 (QCQNHCTSPNTV).

This is an uncharacterized protein from Saccharomyces cerevisiae (strain ATCC 204508 / S288c) (Baker's yeast).